The sequence spans 309 residues: Ribonuclease Z (309 aa).

Zn(2+) is bound by residues His-63, His-65, Asp-67, His-68, His-141, Asp-212, and His-270. The active-site Proton acceptor is the Asp-67.

This sequence belongs to the RNase Z family. Homodimer. Zn(2+) is required as a cofactor.

It catalyses the reaction Endonucleolytic cleavage of RNA, removing extra 3' nucleotides from tRNA precursor, generating 3' termini of tRNAs. A 3'-hydroxy group is left at the tRNA terminus and a 5'-phosphoryl group is left at the trailer molecule.. In terms of biological role, zinc phosphodiesterase, which displays some tRNA 3'-processing endonuclease activity. Probably involved in tRNA maturation, by removing a 3'-trailer from precursor tRNA. In Limosilactobacillus reuteri (strain DSM 20016) (Lactobacillus reuteri), this protein is Ribonuclease Z.